Here is a 1002-residue protein sequence, read N- to C-terminus: SIT4-associating protein SAP155 (1002 aa).

Disordered regions lie at residues G51–M131, Q214–D273, E609–Y645, D868–Q901, and N940–E1002. S58 is subject to Phosphoserine. Basic and acidic residues predominate over residues E62–S97. The segment covering M98–S114 has biased composition (low complexity). Positions S220–N241 are enriched in acidic residues. S255 is modified (phosphoserine). The span at N262–D273 shows a compositional bias: acidic residues. Positions E609–K626 are enriched in basic and acidic residues. Phosphothreonine is present on residues T613 and T618. Positions D635–Y645 are enriched in acidic residues. Positions D868–I885 are enriched in polar residues. Positions S956–N976 are enriched in low complexity. Over residues E991 to E1002 the composition is skewed to acidic residues.

This sequence belongs to the SAPS family. Associates with the SIT4 protein phosphatase catalytic subunit in a cell-cycle-dependent manner. In terms of processing, hyperphosphorylated in the absence of SIT4.

Its subcellular location is the cytoplasm. In terms of biological role, positive regulator of protein phosphatase SIT4. Involved in directing expression of TOR-repressed genes and in dephosphorylation of NPR1 in response to nutrient starvation. Negatively modulates K(+) efflux of the cell by the Na(+)-K(+)/H(+) antiporter NHA1. This is SIT4-associating protein SAP155 (SAP155) from Saccharomyces cerevisiae (strain ATCC 204508 / S288c) (Baker's yeast).